The following is a 403-amino-acid chain: Ribosomal RNA large subunit methyltransferase I (403 aa).

The PUA domain occupies Y9–R88.

It belongs to the methyltransferase superfamily. RlmI family.

Its subcellular location is the cytoplasm. The enzyme catalyses cytidine(1962) in 23S rRNA + S-adenosyl-L-methionine = 5-methylcytidine(1962) in 23S rRNA + S-adenosyl-L-homocysteine + H(+). Specifically methylates the cytosine at position 1962 (m5C1962) of 23S rRNA. The chain is Ribosomal RNA large subunit methyltransferase I from Salmonella agona (strain SL483).